Consider the following 318-residue polypeptide: Pantothenate kinase (318 aa).

Residue 96–103 coordinates ATP; that stretch reads GSVAVGKS.

This sequence belongs to the prokaryotic pantothenate kinase family.

It localises to the cytoplasm. The catalysed reaction is (R)-pantothenate + ATP = (R)-4'-phosphopantothenate + ADP + H(+). It participates in cofactor biosynthesis; coenzyme A biosynthesis; CoA from (R)-pantothenate: step 1/5. The polypeptide is Pantothenate kinase (Bradyrhizobium diazoefficiens (strain JCM 10833 / BCRC 13528 / IAM 13628 / NBRC 14792 / USDA 110)).